Here is a 412-residue protein sequence, read N- to C-terminus: CinA-like protein (412 aa).

The protein belongs to the CinA family.

This chain is CinA-like protein, found in Syntrophotalea carbinolica (strain DSM 2380 / NBRC 103641 / GraBd1) (Pelobacter carbinolicus).